The following is a 190-amino-acid chain: Surfactant protein C (190 aa).

The propeptide occupies 1–24 (MDVGSKEVLMESPPDYTAVPGGRL). S-palmitoyl cysteine attachment occurs at residues Cys-28 and Cys-29. A propeptide spanning residues 59-190 (HMSQKHTEMV…LCGEVPLYYT (132 aa)) is cleaved from the precursor. Residues 94 to 190 (FSIGSTGTVV…LCGEVPLYYT (97 aa)) enclose the BRICHOS domain. A disulfide bond links Cys-121 and Cys-182.

The protein localises to the secreted. It is found in the extracellular space. The protein resides in the surface film. In terms of biological role, pulmonary surfactant associated proteins promote alveolar stability by lowering the surface tension at the air-liquid interface in the peripheral air spaces. In Bos taurus (Bovine), this protein is Surfactant protein C (SFTPC).